The following is a 601-amino-acid chain: Glutamyl-tRNA(Gln) amidotransferase subunit B, mitochondrial (601 aa).

The N-terminal 52 residues, 1 to 52 (MLQQWLRQSPGAARFLRGSCCRGPQSGSLRHSPLPTAPHRCIRSLQTSATES), are a transit peptide targeting the mitochondrion.

This sequence belongs to the GatB/GatE family. GatB subfamily. Subunit of the heterotrimeric GatCAB amidotransferase (AdT) complex, composed of A, B and C subunits.

Its subcellular location is the mitochondrion. It carries out the reaction L-glutamyl-tRNA(Gln) + L-glutamine + ATP + H2O = L-glutaminyl-tRNA(Gln) + L-glutamate + ADP + phosphate + H(+). Allows the formation of correctly charged Gln-tRNA(Gln) through the transamidation of misacylated Glu-tRNA(Gln) in the mitochondria. The reaction takes place in the presence of glutamine and ATP through an activated gamma-phospho-Glu-tRNA(Gln). The sequence is that of Glutamyl-tRNA(Gln) amidotransferase subunit B, mitochondrial from Neosartorya fischeri (strain ATCC 1020 / DSM 3700 / CBS 544.65 / FGSC A1164 / JCM 1740 / NRRL 181 / WB 181) (Aspergillus fischerianus).